The chain runs to 525 residues: GMP synthase [glutamine-hydrolyzing] (525 aa).

Positions R9–L207 constitute a Glutamine amidotransferase type-1 domain. The active-site Nucleophile is the C86. Residues H181 and E183 contribute to the active site. In terms of domain architecture, GMPS ATP-PPase spans W208–R400. S235–S241 provides a ligand contact to ATP.

As to quaternary structure, homodimer.

The enzyme catalyses XMP + L-glutamine + ATP + H2O = GMP + L-glutamate + AMP + diphosphate + 2 H(+). The protein operates within purine metabolism; GMP biosynthesis; GMP from XMP (L-Gln route): step 1/1. In terms of biological role, catalyzes the synthesis of GMP from XMP. This is GMP synthase [glutamine-hydrolyzing] from Cellvibrio japonicus (strain Ueda107) (Pseudomonas fluorescens subsp. cellulosa).